Consider the following 57-residue polypeptide: COP9 signalosome complex subunit 9 (57 aa).

It belongs to the CSN9 family. In terms of assembly, component of the CSN complex, probably composed of cops1, cops2, cops3, cops4, cops5, cops6, cops7, cops8 and cops9.

Its subcellular location is the nucleus. It is found in the cytoplasm. The protein resides in the nucleoplasm. Its function is as follows. Component of the COP9 signalosome complex (CSN), a complex involved in various cellular and developmental processes. The CSN complex is an essential regulator of the ubiquitin (Ubl) conjugation pathway by mediating the deneddylation of the cullin subunits of SCF-type E3 ligase complexes, leading to decrease the Ubl ligase activity. May play a role in cell proliferation. In Xenopus laevis (African clawed frog), this protein is COP9 signalosome complex subunit 9.